We begin with the raw amino-acid sequence, 486 residues long: Sensor protein PhoQ (486 aa).

Over 1-16 (MKKLLRLFFPLSLRVR) the chain is Cytoplasmic. A helical transmembrane segment spans residues 17–37 (FLLATAAVVLVLSLAYGMVAL). The Periplasmic portion of the chain corresponds to 38-194 (IGYSVSFDKT…LKSSYMVWSW (157 aa)). Residues Asp151 and Asp152 each coordinate a divalent metal cation. A helical transmembrane segment spans residues 195-215 (FIYVLSANLLLVIPLLWVAAW). Positions 215-266 (WWSLRPIEALAKEVRELEEHNRELLNPATTRELTSLVRNLNRLLKSERERYD) constitute an HAMP domain. Residues 216-486 (WSLRPIEALA…GRQHSAPKDE (271 aa)) are Cytoplasmic-facing. The region spanning 274–480 (DLTHSLKTPL…RMEVIFGRQH (207 aa)) is the Histidine kinase domain. His277 is modified (phosphohistidine; by autocatalysis). Asn385 is a Mg(2+) binding site. ATP is bound by residues 385 to 393 (NVLDNACKY), 415 to 420 (DDGPGI), and 434 to 446 (RVDTLRPGQGVGL). Gln442 contributes to the Mg(2+) binding site.

As to quaternary structure, homodimer; probably dimerizes via the cytoplasmic domain. Probably interacts with MgrB in the periplasm, altering its activity and that of downstream effector PhoP.

The protein resides in the cell inner membrane. It carries out the reaction ATP + protein L-histidine = ADP + protein N-phospho-L-histidine.. With respect to regulation, acetyl-CoA acts as a non-competitive inhibitor of the PhoQ autokinase activity. Feedback inhibited by MgrB, which seems to bind PhoQ, altering its activity and that of downstream effector PhoP. In terms of biological role, member of the two-component regulatory system PhoP/PhoQ involved in adaptation to low Mg(2+) environments and the control of acid resistance genes. In low periplasmic Mg(2+), PhoQ functions as a membrane-associated protein kinase that undergoes autophosphorylation and subsequently transfers the phosphate to PhoP, resulting in the expression of PhoP-activated genes (PAG) and repression of PhoP-repressed genes (PRG). In high periplasmic Mg(2+), acts as a protein phosphatase that dephosphorylates phospho-PhoP, resulting in the repression of PAG and may lead to expression of some PRG. PhoP-regulated transcription is redox-sensitive, being activated when the periplasm becomes more reducing (deletion of dsbA/dsbB, or treatment with dithiothreitol). MgrB acts between DsbA/DsbB and PhoP/PhoQ in this pathway; the 2 periplasmic Cys residues of MgrB are required for its action on PhoQ, which then acts on PhoP. Mediates magnesium influx to the cytosol by activation of mgtA. Promotes expression of the two-component regulatory system rstA/rstB and transcription of the hemL, mgrB, nagA, slyB, vboR and yrbL genes. The polypeptide is Sensor protein PhoQ (phoQ) (Escherichia coli (strain K12)).